The primary structure comprises 92 residues: Putative defensin-like protein 251 (92 aa).

The N-terminal stretch at 1 to 27 (MRCVTSFVVFCILMFFVLNIFTVEVKA) is a signal peptide. 4 disulfides stabilise this stretch: Cys-34–Cys-90, Cys-45–Cys-69, Cys-53–Cys-82, and Cys-67–Cys-84.

The protein belongs to the DEFL family.

Its subcellular location is the secreted. The polypeptide is Putative defensin-like protein 251 (SCRL12) (Arabidopsis thaliana (Mouse-ear cress)).